The chain runs to 179 residues: Small ribosomal subunit protein uS5c (179 aa).

The S5 DRBM domain occupies 26–89; the sequence is FVERLIKISR…TDGRKNLIDV (64 aa).

It belongs to the universal ribosomal protein uS5 family. In terms of assembly, part of the 30S ribosomal subunit. Contacts protein S4.

It is found in the plastid. It localises to the chloroplast. In terms of biological role, with S4 and S12 plays an important role in translational accuracy. The protein is Small ribosomal subunit protein uS5c (rps5) of Thalassiosira pseudonana (Marine diatom).